Here is a 249-residue protein sequence, read N- to C-terminus: MTRYKAIISYDGYGFAGFQRQPHARSVQEEIEKTLTRINKGRPVVIHGAGRTDSGVHALGQVLHFDLPEDRDEEKLRFALDTQTPEDIDFISVEQVSDDFHSRYNKHSKTYEFLVDIGRPKNPMMRHYATHYPYPLELGLIEEAIAQLEGTHDFTGFTASGTSVEDKVRTITEAKVRFDAERNFLVFTFSGNGFLYKQIRNMVGTLLKIGNKRMPIEQIQRILAEKDRHLAGPTAGPNGLYLKEIRYEE.

Residue aspartate 53 is the Nucleophile of the active site. Residue tyrosine 111 coordinates substrate.

This sequence belongs to the tRNA pseudouridine synthase TruA family. In terms of assembly, homodimer.

It catalyses the reaction uridine(38/39/40) in tRNA = pseudouridine(38/39/40) in tRNA. Its function is as follows. Formation of pseudouridine at positions 38, 39 and 40 in the anticodon stem and loop of transfer RNAs. The polypeptide is tRNA pseudouridine synthase A (Streptococcus sanguinis (strain SK36)).